We begin with the raw amino-acid sequence, 460 residues long: MTNYAIILAAGKGTRMTSDLPKVLHKVSGLTMLEHVFRSVKAINPEKAVTVIGHKSEMVRAVLADQSAFVHQTEQLGTGHAVMMAETQLEGLEGHTLVIAGDTPLITGESLKSLIDFHVNHKNVATILTATAPDPFGYGRIVRNKDGEVIKIVEQKDANEYEQQLKEINTGTYVFDNKRLFEALKCITTNNAQGEYYLTDVVAIFRANKEKVGAYILRDFNESLGVNDRVALATAETVMRQRITQKHMVNGVTFHNPETVYIESDVTIAPDVLIEGNVTLKGRTHIGSGTVLTNGTYIVDSEIGDNCVVTNSMIESSVLAAGVTVGPYAHLRPGTTLDREVHIGNFVEVKGSHIGEKTKAGHLTYIGNAQVGSSVNVGAGTITVNYDGQNKYETVVGDHAFIGSNSTLIAPLEIGDNALTAAGSTISKTVPADSIVIGRSRQVTKEGYAKRLAHHPSRSK.

Residues 1 to 229 are pyrophosphorylase; the sequence is MTNYAIILAA…FNESLGVNDR (229 aa). UDP-N-acetyl-alpha-D-glucosamine-binding positions include 8 to 11, lysine 22, glutamine 72, and 77 to 78; these read LAAG and GT. Aspartate 102 contributes to the Mg(2+) binding site. Residues glycine 139, glutamate 154, asparagine 169, and asparagine 227 each coordinate UDP-N-acetyl-alpha-D-glucosamine. Residue asparagine 227 participates in Mg(2+) binding. A linker region spans residues 230 to 250; that stretch reads VALATAETVMRQRITQKHMVN. The tract at residues 251–460 is N-acetyltransferase; it reads GVTFHNPETV…RLAHHPSRSK (210 aa). UDP-N-acetyl-alpha-D-glucosamine-binding residues include arginine 332 and lysine 350. Residue histidine 362 is the Proton acceptor of the active site. The UDP-N-acetyl-alpha-D-glucosamine site is built by tyrosine 365 and asparagine 376. Residues alanine 379, 385–386, serine 404, alanine 422, and arginine 439 each bind acetyl-CoA; that span reads NY.

In the N-terminal section; belongs to the N-acetylglucosamine-1-phosphate uridyltransferase family. This sequence in the C-terminal section; belongs to the transferase hexapeptide repeat family. In terms of assembly, homotrimer. Mg(2+) serves as cofactor.

It is found in the cytoplasm. The enzyme catalyses alpha-D-glucosamine 1-phosphate + acetyl-CoA = N-acetyl-alpha-D-glucosamine 1-phosphate + CoA + H(+). It carries out the reaction N-acetyl-alpha-D-glucosamine 1-phosphate + UTP + H(+) = UDP-N-acetyl-alpha-D-glucosamine + diphosphate. It functions in the pathway nucleotide-sugar biosynthesis; UDP-N-acetyl-alpha-D-glucosamine biosynthesis; N-acetyl-alpha-D-glucosamine 1-phosphate from alpha-D-glucosamine 6-phosphate (route II): step 2/2. It participates in nucleotide-sugar biosynthesis; UDP-N-acetyl-alpha-D-glucosamine biosynthesis; UDP-N-acetyl-alpha-D-glucosamine from N-acetyl-alpha-D-glucosamine 1-phosphate: step 1/1. Its pathway is bacterial outer membrane biogenesis; LPS lipid A biosynthesis. Functionally, catalyzes the last two sequential reactions in the de novo biosynthetic pathway for UDP-N-acetylglucosamine (UDP-GlcNAc). The C-terminal domain catalyzes the transfer of acetyl group from acetyl coenzyme A to glucosamine-1-phosphate (GlcN-1-P) to produce N-acetylglucosamine-1-phosphate (GlcNAc-1-P), which is converted into UDP-GlcNAc by the transfer of uridine 5-monophosphate (from uridine 5-triphosphate), a reaction catalyzed by the N-terminal domain. The polypeptide is Bifunctional protein GlmU (Streptococcus pyogenes serotype M3 (strain ATCC BAA-595 / MGAS315)).